A 98-amino-acid polypeptide reads, in one-letter code: Beta-elicitin cinnamomin (98 aa).

3 disulfide bridges follow: Cys3–Cys71, Cys27–Cys56, and Cys51–Cys95. Residues 33–42 (YSMLTATALP) carry the Beak-like motif 1 (ligand binding) motif. Residues 72–83 (DLTVPTSGLVLD) carry the Beak-like motif 2 (ligand binding) motif.

Belongs to the elicitin family.

The protein localises to the secreted. Induces local and distal defense responses (incompatible hypersensitive reaction) in plants from the solanaceae and cruciferae families. Elicits leaf necrosis and causes the accumulation of pathogenesis-related proteins. Might interact with the lipidic molecules of the plasma membrane. Elicitins are able to load, carry, and transfer sterols between membranes. The polypeptide is Beta-elicitin cinnamomin (Phytophthora cinnamomi (Cinnamon fungus)).